Reading from the N-terminus, the 203-residue chain is Small ribosomal subunit protein uS7A (203 aa).

This sequence belongs to the universal ribosomal protein uS7 family. In terms of assembly, component of the small ribosomal subunit (SSU). Mature yeast ribosomes consist of a small (40S) and a large (60S) subunit. The 40S small subunit contains 1 molecule of ribosomal RNA (18S rRNA) and at least 33 different proteins. The large 60S subunit contains 3 rRNA molecules (25S, 5.8S and 5S rRNA) and at least 46 different proteins.

It localises to the cytoplasm. The protein resides in the nucleus. It is found in the nucleolus. Component of the ribosome, a large ribonucleoprotein complex responsible for the synthesis of proteins in the cell. The small ribosomal subunit (SSU) binds messenger RNAs (mRNAs) and translates the encoded message by selecting cognate aminoacyl-transfer RNA (tRNA) molecules. The large subunit (LSU) contains the ribosomal catalytic site termed the peptidyl transferase center (PTC), which catalyzes the formation of peptide bonds, thereby polymerizing the amino acids delivered by tRNAs into a polypeptide chain. The nascent polypeptides leave the ribosome through a tunnel in the LSU and interact with protein factors that function in enzymatic processing, targeting, and the membrane insertion of nascent chains at the exit of the ribosomal tunnel. This chain is Small ribosomal subunit protein uS7A (rps5), found in Schizosaccharomyces pombe (strain 972 / ATCC 24843) (Fission yeast).